The primary structure comprises 367 residues: Cytochrome P450 119 (367 aa).

Heme-binding residues include H76, R80, T257, R259, H315, and C317.

This sequence belongs to the cytochrome P450 family. Heme is required as a cofactor.

Its subcellular location is the cytoplasm. The polypeptide is Cytochrome P450 119 (cyp119) (Sulfurisphaera tokodaii (strain DSM 16993 / JCM 10545 / NBRC 100140 / 7) (Sulfolobus tokodaii)).